The primary structure comprises 562 residues: Probable malate:quinone oxidoreductase (562 aa).

Residues 535–562 are disordered; that stretch reads SATPADPTIAPKNQHSTTYNANSEMQAL. Residues 545 to 562 are compositionally biased toward polar residues; sequence PKNQHSTTYNANSEMQAL.

It belongs to the MQO family. FAD serves as cofactor.

The enzyme catalyses (S)-malate + a quinone = a quinol + oxaloacetate. It functions in the pathway carbohydrate metabolism; tricarboxylic acid cycle; oxaloacetate from (S)-malate (quinone route): step 1/1. The protein is Probable malate:quinone oxidoreductase of Xylella fastidiosa (strain M23).